Here is a 215-residue protein sequence, read N- to C-terminus: Cytidylate kinase (215 aa).

10–18 lines the ATP pocket; the sequence is GPAAAGKST.

The protein belongs to the cytidylate kinase family. Type 1 subfamily.

It is found in the cytoplasm. The catalysed reaction is CMP + ATP = CDP + ADP. The enzyme catalyses dCMP + ATP = dCDP + ADP. The polypeptide is Cytidylate kinase (Staphylococcus epidermidis (strain ATCC 35984 / DSM 28319 / BCRC 17069 / CCUG 31568 / BM 3577 / RP62A)).